The sequence spans 176 residues: Putative phosphohydrolase YueE (176 aa).

Residues 23–139 form the HD domain; the sequence is GVAHAIACAY…VKKADELDEE (117 aa).

The sequence is that of Putative phosphohydrolase YueE (yueE) from Bacillus subtilis (strain 168).